The sequence spans 259 residues: Adenosylcobinamide-GDP ribazoletransferase (259 aa).

Helical transmembrane passes span N9–V29, L43–V63, S64–H84, A118–F138, V143–F163, and I190–L210.

The protein belongs to the CobS family. It depends on Mg(2+) as a cofactor.

The protein localises to the cell inner membrane. The catalysed reaction is alpha-ribazole + adenosylcob(III)inamide-GDP = adenosylcob(III)alamin + GMP + H(+). It carries out the reaction alpha-ribazole 5'-phosphate + adenosylcob(III)inamide-GDP = adenosylcob(III)alamin 5'-phosphate + GMP + H(+). It participates in cofactor biosynthesis; adenosylcobalamin biosynthesis; adenosylcobalamin from cob(II)yrinate a,c-diamide: step 7/7. In terms of biological role, joins adenosylcobinamide-GDP and alpha-ribazole to generate adenosylcobalamin (Ado-cobalamin). Also synthesizes adenosylcobalamin 5'-phosphate from adenosylcobinamide-GDP and alpha-ribazole 5'-phosphate. This chain is Adenosylcobinamide-GDP ribazoletransferase, found in Shewanella pealeana (strain ATCC 700345 / ANG-SQ1).